We begin with the raw amino-acid sequence, 358 residues long: MKPFPRAEISSSALQNNLAVLRQQASRSQVMAVVKANGYGHGLLNVANCLHTADGFGLARLEEALELRAGGVKARLLLLEGFFRSTDLPLLVAHDIDTVVHHESQIEMLEQATLSKPVTVWLKVDSGMHRLGVTPEQFAQVYARLTACDNVAKPIHLMTHFACADEPENNYTQVQMQTFNQLTADLPGFRTLANSAGALYWPKSQGDWIRPGIALYGVSPVTGDCGANHGLIPAMNLVSRLIAVRDHKAGQPVGYGCYWTAKQDTRLGVVAIGYGDGYPRNAPEGTPVWVNGRRVPIVGRVSMDMLTVDLGADAADQVGDEALLWGAALPVEEVAEHIGTIAYELVTKLTPRVAVCLA.

Lysine 35 serves as the catalytic Proton acceptor; specific for D-alanine. Lysine 35 carries the post-translational modification N6-(pyridoxal phosphate)lysine. Arginine 130 contacts substrate. Tyrosine 255 acts as the Proton acceptor; specific for L-alanine in catalysis. Position 303 (methionine 303) interacts with substrate.

It belongs to the alanine racemase family. Pyridoxal 5'-phosphate serves as cofactor.

It catalyses the reaction L-alanine = D-alanine. Its pathway is amino-acid biosynthesis; D-alanine biosynthesis; D-alanine from L-alanine: step 1/1. In terms of biological role, catalyzes the interconversion of L-alanine and D-alanine. May also act on other amino acids. This chain is Alanine racemase (alr), found in Shewanella sp. (strain MR-7).